The sequence spans 229 residues: ATP synthase subunit a (229 aa).

The next 6 helical transmembrane spans lie at 25-45 (ADAIAYTWLIIVCLLIVSLIA), 86-106 (IATLALFVLVSNLIGLIPGFF), 111-131 (NLNTTAACAVIVFLSTHIVGI), 142-162 (FMGPIWWLAPLMFFIEIIGHL), 181-201 (LVLMIFFALAPFLVPLPMMLM), and 202-222 (GVLVSFIQAFVFMLLAMIYIQ).

Belongs to the ATPase A chain family. In terms of assembly, F-type ATPases have 2 components, CF(1) - the catalytic core - and CF(0) - the membrane proton channel. CF(1) has five subunits: alpha(3), beta(3), gamma(1), delta(1), epsilon(1). CF(0) has three main subunits: a(1), b(2) and c(9-12). The alpha and beta chains form an alternating ring which encloses part of the gamma chain. CF(1) is attached to CF(0) by a central stalk formed by the gamma and epsilon chains, while a peripheral stalk is formed by the delta and b chains.

The protein resides in the cell inner membrane. In terms of biological role, key component of the proton channel; it plays a direct role in the translocation of protons across the membrane. The sequence is that of ATP synthase subunit a from Geobacter sulfurreducens (strain ATCC 51573 / DSM 12127 / PCA).